The chain runs to 260 residues: Zinc import ATP-binding protein ZnuC (260 aa).

An ABC transporter domain is found at 18-234; the sequence is IRLQEVAVTF…PEYQKLFGSH (217 aa). ATP is bound at residue 50 to 57; sequence GNNGAGKT. The disordered stretch occupies residues 241-260; that stretch reads VFPHDHHDHSGPALAGGGRG.

The protein belongs to the ABC transporter superfamily. Zinc importer (TC 3.A.1.15.5) family. In terms of assembly, the complex is composed of two ATP-binding proteins (ZnuC), two transmembrane proteins (ZnuB) and a solute-binding protein (ZnuA).

Its subcellular location is the cell inner membrane. The enzyme catalyses Zn(2+)(out) + ATP(in) + H2O(in) = Zn(2+)(in) + ADP(in) + phosphate(in) + H(+)(in). In terms of biological role, part of the ABC transporter complex ZnuABC involved in zinc import. Responsible for energy coupling to the transport system. The polypeptide is Zinc import ATP-binding protein ZnuC (Halorhodospira halophila (strain DSM 244 / SL1) (Ectothiorhodospira halophila (strain DSM 244 / SL1))).